We begin with the raw amino-acid sequence, 1543 residues long: DNA-directed RNA polymerase subunit beta' (1543 aa).

The Zn(2+) site is built by Cys-60, Cys-62, Cys-75, and Cys-78. Residues Asp-627, Asp-629, and Asp-631 each coordinate Mg(2+). Residues Cys-1017, Cys-1097, Cys-1104, and Cys-1107 each contribute to the Zn(2+) site. 2 disordered regions span residues 1466–1490 (PADR…APPR) and 1522–1543 (AEEG…EENV).

It belongs to the RNA polymerase beta' chain family. The RNAP catalytic core consists of 2 alpha, 1 beta, 1 beta' and 1 omega subunit. When a sigma factor is associated with the core the holoenzyme is formed, which can initiate transcription. Mg(2+) serves as cofactor. The cofactor is Zn(2+).

The catalysed reaction is RNA(n) + a ribonucleoside 5'-triphosphate = RNA(n+1) + diphosphate. In terms of biological role, DNA-dependent RNA polymerase catalyzes the transcription of DNA into RNA using the four ribonucleoside triphosphates as substrates. This is DNA-directed RNA polymerase subunit beta' from Herpetosiphon aurantiacus (strain ATCC 23779 / DSM 785 / 114-95).